A 394-amino-acid chain; its full sequence is Phosphoglycerate kinase (394 aa).

Residues 21–23 (DFN), Arg-36, 59–62 (HLGR), Arg-118, and Arg-151 contribute to the substrate site. The residue at position 183 (Ser-183) is a Phosphoserine. Lys-201 and Gly-292 together coordinate ATP. Thr-299 is modified (phosphothreonine). ATP-binding positions include Glu-323 and 350-353 (GGDS).

The protein belongs to the phosphoglycerate kinase family. As to quaternary structure, monomer.

It is found in the cytoplasm. It catalyses the reaction (2R)-3-phosphoglycerate + ATP = (2R)-3-phospho-glyceroyl phosphate + ADP. It participates in carbohydrate degradation; glycolysis; pyruvate from D-glyceraldehyde 3-phosphate: step 2/5. This chain is Phosphoglycerate kinase, found in Bacillus cereus (strain G9842).